The chain runs to 519 residues: Cytosol aminopeptidase (519 aa).

Residue K45 is modified to N6-succinyllysine. S54 carries the phosphoserine modification. K61 and K103 each carry N6-succinyllysine. Phosphoserine is present on residues S180 and S194. Residues L202 and M203 each coordinate Zn(2+). K221 bears the N6-acetyllysine; alternate mark. K221 carries the N6-succinyllysine; alternate modification. S238 carries the phosphoserine modification. 2 residues coordinate Zn(2+): K282 and D287. Substrate-binding residues include K282, D287, S292, and K294. A Mg(2+)-binding site is contributed by D287. K294 is a catalytic residue. 4 residues coordinate Zn(2+): R303, D305, D364, and E366. Residues D305 and D364 each coordinate substrate. Positions 364 and 366 each coordinate Mg(2+). The active site involves R368. N6-acetyllysine; alternate is present on K455. K455 is subject to N6-succinyllysine; alternate. An N6-succinyllysine modification is found at K476. K489 carries the post-translational modification N6-acetyllysine; alternate. K489 carries the post-translational modification N6-succinyllysine; alternate.

This sequence belongs to the peptidase M17 family. In terms of assembly, homohexamer. Zn(2+) serves as cofactor. Requires Mn(2+) as cofactor.

It is found in the cytoplasm. The catalysed reaction is Release of an N-terminal amino acid, Xaa-|-Yaa-, in which Xaa is preferably Leu, but may be other amino acids including Pro although not Arg or Lys, and Yaa may be Pro. Amino acid amides and methyl esters are also readily hydrolyzed, but rates on arylamides are exceedingly low.. It carries out the reaction an S-substituted L-cysteinylglycine + H2O = an S-substituted L-cysteine + glycine. The enzyme catalyses L-cysteinylglycine + H2O = L-cysteine + glycine. It catalyses the reaction S-benzyl-L-cysteinylglycine + H2O = S-benzyl-L-cysteine + glycine. The catalysed reaction is Release of N-terminal proline from a peptide.. Cytosolic metallopeptidase that catalyzes the removal of unsubstituted N-terminal hydrophobic amino acids from various peptides. The presence of Zn(2+) ions is essential for the peptidase activity, and the association with other cofactors can modulate the substrate spectificity of the enzyme. For instance, in the presence of Mn(2+), it displays a specific Cys-Gly hydrolyzing activity of Cys-Gly-S-conjugates. Involved in the metabolism of glutathione and in the degradation of glutathione S-conjugates, which may play a role in the control of the cell redox status. The polypeptide is Cytosol aminopeptidase (Mus musculus (Mouse)).